The sequence spans 356 residues: Manganese-dependent ADP-ribose/CDP-alcohol diphosphatase (356 aa).

The Zn(2+) site is built by aspartate 32, glutamine 34, aspartate 81, asparagine 117, histidine 253, histidine 290, and histidine 292.

This sequence belongs to the ADPRibase-Mn family. Monomer. Requires Mg(2+) as cofactor.

The catalysed reaction is CDP-choline + H2O = phosphocholine + CMP + 2 H(+). It catalyses the reaction ADP-D-ribose + H2O = D-ribose 5-phosphate + AMP + 2 H(+). It carries out the reaction CDP-glycerol + H2O = sn-glycerol 3-phosphate + CMP + 2 H(+). In terms of biological role, hydrolyzes ADP-ribose, IDP-ribose, CDP-glycerol, CDP-choline and CDP-ethanolamine, but not other non-reducing ADP-sugars or CDP-glucose. The polypeptide is Manganese-dependent ADP-ribose/CDP-alcohol diphosphatase (adprm) (Xenopus laevis (African clawed frog)).